The primary structure comprises 156 residues: Ribosomal RNA large subunit methyltransferase H (156 aa).

S-adenosyl-L-methionine-binding positions include L73, G104, and 123 to 128 (VSSLTL).

It belongs to the RNA methyltransferase RlmH family. In terms of assembly, homodimer.

Its subcellular location is the cytoplasm. The enzyme catalyses pseudouridine(1915) in 23S rRNA + S-adenosyl-L-methionine = N(3)-methylpseudouridine(1915) in 23S rRNA + S-adenosyl-L-homocysteine + H(+). Specifically methylates the pseudouridine at position 1915 (m3Psi1915) in 23S rRNA. In Burkholderia thailandensis (strain ATCC 700388 / DSM 13276 / CCUG 48851 / CIP 106301 / E264), this protein is Ribosomal RNA large subunit methyltransferase H.